The primary structure comprises 422 residues: E3 ubiquitin-protein ligase IE2 (422 aa).

The segment covering 1–10 (MSRQINAVTP) has biased composition (polar residues). Disordered regions lie at residues 1-86 (MSRQ…VQII) and 165-215 (SPRS…EGEE). Residues 14–26 (SRRHRLSLSRRRI) show a composition bias toward basic residues. A compositionally biased stretch (low complexity) spans 36 to 63 (PSSSSRSQPSSSSRSQPYSSSRSQPYSS). The segment covering 71–80 (ERSQEQRVSE) has biased composition (basic and acidic residues). A compositionally biased stretch (polar residues) spans 179-196 (DVLSQSPDLFDSPQSPQQ). Residues 200–215 (ELEDEDEEEEEEEGEE) are compositionally biased toward acidic residues. Residues 220 to 268 (CNICFTTLKDTKNVDSSFVTSIDCNHAVCFKCYVRIIMDNSTYKCFCSA) form an RING-type; degenerate zinc finger. The stretch at 314-414 (IDLNDVERLE…RRNSELVAEL (101 aa)) forms a coiled coil.

Belongs to the alphabaculovirus IE2 protein family. In terms of assembly, homooligomer. Auto-ubiquitinated.

The protein resides in the host nucleus. It carries out the reaction S-ubiquitinyl-[E2 ubiquitin-conjugating enzyme]-L-cysteine + [acceptor protein]-L-lysine = [E2 ubiquitin-conjugating enzyme]-L-cysteine + N(6)-ubiquitinyl-[acceptor protein]-L-lysine.. Functionally, RING-finger E3 ubiquitin ligase that plays an important regulatory role during the initial stages of infection. Migrates to specific nuclear foci early in infection supposely to prepare the sites for viral replication by targeting and ubiquitinating host proteins. This is E3 ubiquitin-protein ligase IE2 (IE2) from Bombyx mori nuclear polyhedrosis virus (BmNPV).